Reading from the N-terminus, the 32-residue chain is Cytochrome b6-f complex subunit 7 (32 aa).

A helical transmembrane segment spans residues 9-27 (AALFWVLIPLGLAGGALLL).

The protein belongs to the PetM family. As to quaternary structure, the 4 large subunits of the cytochrome b6-f complex are cytochrome b6, subunit IV (17 kDa polypeptide, PetD), cytochrome f and the Rieske protein, while the 4 small subunits are PetG, PetL, PetM and PetN. The complex functions as a dimer.

It is found in the cellular thylakoid membrane. Component of the cytochrome b6-f complex, which mediates electron transfer between photosystem II (PSII) and photosystem I (PSI), cyclic electron flow around PSI, and state transitions. The chain is Cytochrome b6-f complex subunit 7 from Synechococcus sp. (strain RCC307).